The chain runs to 179 residues: Auxin-responsive protein IAA15 (179 aa).

The short motif at 21–25 (LTLAL) is the EAR-like (transcriptional repression) element. The 88-residue stretch at 86–173 (RKYVKVALDG…SCKRMRLMKT (88 aa)) folds into the PB1 domain.

Belongs to the Aux/IAA family. As to quaternary structure, homodimers and heterodimers.

It is found in the nucleus. Functionally, aux/IAA proteins are short-lived transcriptional factors that function as repressors of early auxin response genes at low auxin concentrations. Repression is thought to result from the interaction with auxin response factors (ARFs), proteins that bind to the auxin-responsive promoter element (AuxRE). Formation of heterodimers with ARF proteins may alter their ability to modulate early auxin response genes expression. This is Auxin-responsive protein IAA15 (IAA15) from Arabidopsis thaliana (Mouse-ear cress).